The following is a 1186-amino-acid chain: DNA-directed RNA polymerase subunit beta (1186 aa).

Residues 1149–1186 (KEEDDDPSTSSDDLGFNIGARPDAAAKEDQVAEEPEFQ) are disordered.

This sequence belongs to the RNA polymerase beta chain family. As to quaternary structure, the RNAP catalytic core consists of 2 alpha, 1 beta, 1 beta' and 1 omega subunit. When a sigma factor is associated with the core the holoenzyme is formed, which can initiate transcription.

The catalysed reaction is RNA(n) + a ribonucleoside 5'-triphosphate = RNA(n+1) + diphosphate. In terms of biological role, DNA-dependent RNA polymerase catalyzes the transcription of DNA into RNA using the four ribonucleoside triphosphates as substrates. This is DNA-directed RNA polymerase subunit beta from Bifidobacterium adolescentis (strain ATCC 15703 / DSM 20083 / NCTC 11814 / E194a).